A 434-amino-acid polypeptide reads, in one-letter code: Tol-Pal system protein TolB (434 aa).

The N-terminal stretch at 1–24 (MKFSAYLTTLFIVLFSLFIQTVQA) is a signal peptide.

This sequence belongs to the TolB family. The Tol-Pal system is composed of five core proteins: the inner membrane proteins TolA, TolQ and TolR, the periplasmic protein TolB and the outer membrane protein Pal. They form a network linking the inner and outer membranes and the peptidoglycan layer.

The protein localises to the periplasm. Its function is as follows. Part of the Tol-Pal system, which plays a role in outer membrane invagination during cell division and is important for maintaining outer membrane integrity. The polypeptide is Tol-Pal system protein TolB (Histophilus somni (strain 2336) (Haemophilus somnus)).